We begin with the raw amino-acid sequence, 275 residues long: Gamma carbonic anhydrase 1, mitochondrial (275 aa).

The transit peptide at 1–43 (MGTLGRAFYSVGFWIRETGQALDRLGCRLQGKNYFREQLSRHR) directs the protein to the mitochondrion. Residues 86 to 88 (RGD) and 101 to 102 (QD) contribute to the substrate site. The Zn(2+) site is built by His107, His130, and His135. Asn209 is a substrate binding site. The tract at residues 256 to 275 (LNLPNNILPDKETKRPSNVN) is disordered. Residues 264–275 (PDKETKRPSNVN) show a composition bias toward basic and acidic residues.

Belongs to the gamma-class carbonic anhydrase family. As to quaternary structure, homotrimer. Component of the mitochondrial oxidoreductase respiratory chain complex I; element of the extra matrix-exposed domain, which is attached to the membrane arm of this complex. Zn(2+) serves as cofactor.

Its subcellular location is the mitochondrion membrane. Its function is as follows. Enzyme involved in the catabolism of H(2)CO(3) but that does not mediates the reversible hydration of carbon dioxide. Mediates complex I assembly in mitochondria and respiration. This chain is Gamma carbonic anhydrase 1, mitochondrial (GAMMACA1), found in Arabidopsis thaliana (Mouse-ear cress).